A 96-amino-acid polypeptide reads, in one-letter code: MKIAITMAVVMLSVCCSSASSDTCPGFFQVLEFLFMGSESSYEAALKFYNPGSDLQDSGTQLKKLVDTLPQKTRMNIMKLSEIILTSPLCNQDLSV.

Positions 1–21 (MKIAITMAVVMLSVCCSSASS) are cleaved as a signal peptide.

The protein belongs to the secretoglobin family. As to quaternary structure, antiparallel homodimer; disulfide-linked. Interaction with LMBR1L is controversial.

It is found in the secreted. Functionally, binds phosphatidylcholine, phosphatidylinositol, polychlorinated biphenyls (PCB) and weakly progesterone, potent inhibitor of phospholipase A2. This chain is Uteroglobin (SCGB1A1), found in Mesocricetus auratus (Golden hamster).